We begin with the raw amino-acid sequence, 62 residues long: uncharacterized protein (62 aa).

The protein localises to the plastid. Its subcellular location is the chloroplast. This is an uncharacterized protein from Porphyra purpurea (Red seaweed).